The chain runs to 315 residues: Epithelial cell adhesion molecule (315 aa).

The signal sequence occupies residues 1–23 (MAGPQALAFGLLLAVVTATLAAA). The Extracellular portion of the chain corresponds to 24–266 (QRDCVCDNYK…APEFSMQGLT (243 aa)). Disulfide bonds link cysteine 27–cysteine 46, cysteine 29–cysteine 59, cysteine 38–cysteine 48, cysteine 66–cysteine 99, cysteine 110–cysteine 116, and cysteine 118–cysteine 135. The Thyroglobulin type-1 domain occupies 63–135 (ASKCLAMKAE…RTDKDTEITC (73 aa)). The N-linked (GlcNAc...) asparagine glycan is linked to asparagine 111. N-linked (GlcNAc...) asparagine glycosylation is present at asparagine 198. The helical transmembrane segment at 267–289 (AGIIAVIVVVSLAVIAGIVVLVI) threads the bilayer. At 290-315 (STRKKSAKYEKAEIKEMGEIHRELNA) the chain is on the cytoplasmic side.

The protein belongs to the EPCAM family. Monomer. Interacts with phosphorylated CLDN7. Post-translationally, glycosylation at Asn-198 is crucial for protein stability.

Its subcellular location is the lateral cell membrane. It is found in the cell junction. It localises to the tight junction. Its function is as follows. May act as a physical homophilic interaction molecule between intestinal epithelial cells (IECs) and intraepithelial lymphocytes (IELs) at the mucosal epithelium for providing immunological barrier as a first line of defense against mucosal infection. Plays a role in embryonic stem cells proliferation and differentiation. Up-regulates the expression of FABP5, MYC and cyclins A and E. This is Epithelial cell adhesion molecule (Epcam) from Mus musculus (Mouse).